A 512-amino-acid polypeptide reads, in one-letter code: GMP synthase [glutamine-hydrolyzing] (512 aa).

The Glutamine amidotransferase type-1 domain maps to 7 to 197 (TIIVLDFGSQ…VFGVCGCSEG (191 aa)). The Nucleophile role is filled by Cys-84. Catalysis depends on residues His-171 and Glu-173. One can recognise a GMPS ATP-PPase domain in the interval 198–387 (WNMENFIEVE…LGIPDEIVWR (190 aa)). ATP is bound at residue 225-231 (SGGVDSS).

Homodimer.

It catalyses the reaction XMP + L-glutamine + ATP + H2O = GMP + L-glutamate + AMP + diphosphate + 2 H(+). It functions in the pathway purine metabolism; GMP biosynthesis; GMP from XMP (L-Gln route): step 1/1. Catalyzes the synthesis of GMP from XMP. The polypeptide is GMP synthase [glutamine-hydrolyzing] (Bacillus cereus (strain ATCC 10987 / NRS 248)).